A 499-amino-acid polypeptide reads, in one-letter code: Glycerol kinase (499 aa).

Threonine 14 is a binding site for ADP. ATP contacts are provided by threonine 14, threonine 15, and serine 16. Threonine 14 is a binding site for sn-glycerol 3-phosphate. Arginine 18 contributes to the ADP binding site. 4 residues coordinate sn-glycerol 3-phosphate: arginine 84, glutamate 85, tyrosine 136, and aspartate 245. 5 residues coordinate glycerol: arginine 84, glutamate 85, tyrosine 136, aspartate 245, and glutamine 246. Positions 267 and 310 each coordinate ADP. The ATP site is built by threonine 267, glycine 310, glutamine 314, and glycine 411. Residues glycine 411 and asparagine 415 each coordinate ADP.

The protein belongs to the FGGY kinase family.

The catalysed reaction is glycerol + ATP = sn-glycerol 3-phosphate + ADP + H(+). Its pathway is polyol metabolism; glycerol degradation via glycerol kinase pathway; sn-glycerol 3-phosphate from glycerol: step 1/1. Inhibited by fructose 1,6-bisphosphate (FBP). In terms of biological role, key enzyme in the regulation of glycerol uptake and metabolism. Catalyzes the phosphorylation of glycerol to yield sn-glycerol 3-phosphate. The chain is Glycerol kinase from Nitrosomonas eutropha (strain DSM 101675 / C91 / Nm57).